The sequence spans 484 residues: PTS system MurNAc-GlcNAc-specific EIIBC component (484 aa).

Residues 5–87 (QQLAERIIAA…AELSGVKLGD (83 aa)) enclose the PTS EIIB type-1 domain. The active-site Phosphocysteine intermediate; for EIIB activity is the Cys27. The PTS EIIC type-1 domain maps to 130-484 (KSIANIFIPL…AMRQTDLLGD (355 aa)). The next 10 membrane-spanning stretches (helical) occupy residues 135-155 (IFIPLIPAFIGAGLIGGIAAV), 160-180 (MVAGYISGAWITQLITVFNVI), 200-220 (FGATPGLGGVIGGTTLLTGIA), 234-254 (LQPGQGGIIGVIFAVWILSIV), 274-294 (IALLIVGLLTIFIFMPLAGFV), 305-325 (IISIGGVFSGFIIGASFLPLV), 349-369 (LLPIAAMAGAGQVGAALALWV), 384-404 (ALPVGFLGIGEPLIYGVTLPL), 408-428 (FLTACIGGGIGGAVIGGIGHI), and 450-470 (LGYIAGLLAAYAGGFVCTYLF).

It localises to the cell membrane. The enzyme catalyses N-acetyl-beta-D-muramate-(1-&gt;4)-N-acetyl-D-glucosamine(out) + N(pros)-phospho-L-histidyl-[protein] = 6-phospho-N-acetyl-beta-D-muramate-(1-&gt;4)-N-acetyl-D-glucosamine(in) + L-histidyl-[protein]. The protein operates within cell wall biogenesis; peptidoglycan recycling. In terms of biological role, the phosphoenolpyruvate-dependent sugar phosphotransferase system (sugar PTS), a major carbohydrate active transport system, catalyzes the phosphorylation of incoming sugar substrates concomitantly with their translocation across the cell membrane. This system is involved in the uptake and phosphorylation of MurNAc-GlcNAc, the principle peptidoglycan turnover product of S.aureus, yielding cytoplasmic MurNAc 6P-GlcNAc. The polypeptide is PTS system MurNAc-GlcNAc-specific EIIBC component (Staphylococcus aureus (strain Mu50 / ATCC 700699)).